We begin with the raw amino-acid sequence, 251 residues long: MILYEYPFNERIRTLLRLEDLFERFTFFLTQEDAREHHVALTTLFEIAEVAGRADLKSDLMKELERQRQTLAPFRGNPGIEQNALEAVLGEMEQTLAGLTQMQGKTGQHLADNEWLASIRSRAIIPGGTCKFDLPSYYAWQQTHPDQRRQDIAKWIMPLLPLRDAAAIVLRLARESGQASKVMAMQGSYQQMLSGRTYQLMQVRVAPELRVIPEASANKYMLWVRFTVQDGDLRPRAVDVDVPFQLTLCSL.

It belongs to the ZapD family. In terms of assembly, interacts with FtsZ.

It localises to the cytoplasm. In terms of biological role, cell division factor that enhances FtsZ-ring assembly. Directly interacts with FtsZ and promotes bundling of FtsZ protofilaments, with a reduction in FtsZ GTPase activity. The chain is Cell division protein ZapD from Paraburkholderia phymatum (strain DSM 17167 / CIP 108236 / LMG 21445 / STM815) (Burkholderia phymatum).